A 396-amino-acid chain; its full sequence is Bifunctional enzyme Fae/Hps (396 aa).

A formaldehyde-activating enzyme region spans residues 1 to 161 (MMLIGEALIG…HEKDRAAHAV (161 aa)). Residue His17 is the Proton donor of the active site. Substrate contacts are provided by Asp19, Leu48, Lys66, Thr68, and Gln83. The tract at residues 162 to 396 (MGFKISKLWD…IDQFRIMTDF (235 aa)) is 3-hexulose-6-phosphate synthase.

It in the N-terminal section; belongs to the formaldehyde-activating enzyme family. The protein in the C-terminal section; belongs to the HPS/KGPDC family. HPS subfamily.

The enzyme catalyses 5,6,7,8-tetrahydromethanopterin + formaldehyde = 5,10-methylenetetrahydromethanopterin + H2O. The catalysed reaction is D-ribulose 5-phosphate + formaldehyde = D-arabino-hex-3-ulose 6-phosphate. It participates in carbohydrate biosynthesis; D-ribose 5-phosphate biosynthesis. Catalyzes the condensation of formaldehyde with tetrahydromethanopterin (H(4)MPT) to 5,10-methylenetetrahydromethanopterin. In terms of biological role, catalyzes the reversible formation of ribulose-5-phosphate and formaldehyde from 3-hexulose-6-phosphate. This chain is Bifunctional enzyme Fae/Hps, found in Methanococcoides burtonii (strain DSM 6242 / NBRC 107633 / OCM 468 / ACE-M).